Here is a 120-residue protein sequence, read N- to C-terminus: Vanadium-binding protein 2 (120 aa).

The signal sequence occupies residues Met-1 to Ala-20. Positions Thr-21–Tyr-29 are excised as a propeptide. 9 disulfides stabilise this stretch: Cys-34-Cys-88, Cys-38-Cys-84, Cys-42-Cys-81, Cys-48-Cys-74, Cys-52-Cys-69, Cys-56-Cys-65, Cys-92-Cys-119, Cys-97-Cys-114, and Cys-101-Cys-111.

Interacts with VIP1. Expressed in vanadocytes.

It is found in the cytoplasm. Its function is as follows. Acts as a vanadium reductase which may form an electron transfer cascade in conjunction with NADPH and glutathione through thiol disulfide exchange reactions. Partial cleavage of its disulfide bonds results in the reduction of V(5+) to V(4+). Binds up to 24 V(4+) ions per protein at pH 7.5. Also binds Fe(3+) and Cu(2+) and, to a lesser extent, Co(2+), Zn(2+) and Ni(2+). This Ascidia sydneiensis samea (Vanadium-rich ascidian) protein is Vanadium-binding protein 2.